The primary structure comprises 84 residues: MKKGIHPENYRPVVFKDMSNDDVFITRSTINAKETIEIDGVTYPLVKVEISNTSHPFYTGKSKLVDTAGRVDKFMSRYGNRNKK.

It belongs to the bacterial ribosomal protein bL31 family. Type B subfamily. In terms of assembly, part of the 50S ribosomal subunit.

This chain is Large ribosomal subunit protein bL31B, found in Parabacteroides distasonis (strain ATCC 8503 / DSM 20701 / CIP 104284 / JCM 5825 / NCTC 11152).